The chain runs to 424 residues: Deoxyguanosinetriphosphate triphosphohydrolase-like protein (424 aa).

The segment at 1 to 27 (MYPYSDADAFRRQPERAKSSQLRTSAV) is disordered. The segment covering 8-18 (DAFRRQPERAK) has biased composition (basic and acidic residues). Positions 67-217 (RLTHSLEVAQ…MDFSDDIAYS (151 aa)) constitute an HD domain.

Belongs to the dGTPase family. Type 2 subfamily.

The polypeptide is Deoxyguanosinetriphosphate triphosphohydrolase-like protein (dgt) (Corynebacterium glutamicum (strain ATCC 13032 / DSM 20300 / JCM 1318 / BCRC 11384 / CCUG 27702 / LMG 3730 / NBRC 12168 / NCIMB 10025 / NRRL B-2784 / 534)).